The following is a 2319-amino-acid chain: Neurogenic locus notch homolog protein 3 (2319 aa).

Positions 1–14 (MGPGARGRRRRRRL) are enriched in basic residues. The disordered stretch occupies residues 1–20 (MGPGARGRRRRRRLMALPPP). Positions 1–40 (MGPGARGRRRRRRLMALPPPPPPMRALPLLLLLLAGLGAA) are cleaved as a signal peptide. 3 consecutive EGF-like domains span residues 41–79 (APPCLDGSPCANGGRCTHQQPSREAACLCLPGWVGERCQ), 80–120 (LEDP…PDCS), and 121–158 (LPDPCFSSPCAHGAPCSVGSDGRYACACPPGYQGRNCR). Residues 41–1645 (APPCLDGSPC…LEPPEQSVPL (1605 aa)) are Extracellular-facing. Intrachain disulfides connect Cys44/Cys56, Cys50/Cys67, Cys69/Cys78, Cys84/Cys95, Cys89/Cys108, Cys110/Cys119, Cys125/Cys136, Cys130/Cys146, Cys148/Cys157, Cys164/Cys176, Cys170/Cys185, Cys187/Cys196, Cys203/Cys214, Cys208/Cys224, Cys226/Cys235, Cys242/Cys253, Cys247/Cys262, Cys264/Cys273, Cys280/Cys293, Cys287/Cys302, Cys304/Cys313, Cys320/Cys331, Cys325/Cys340, Cys342/Cys351, Cys357/Cys368, Cys362/Cys379, Cys381/Cys390, Cys397/Cys410, Cys404/Cys419, Cys421/Cys430, Cys437/Cys448, Cys442/Cys457, Cys459/Cys468, Cys475/Cys486, Cys480/Cys495, Cys497/Cys506, Cys513/Cys524, Cys518/Cys533, Cys535/Cys544, Cys551/Cys561, Cys556/Cys570, Cys572/Cys581, Cys588/Cys599, Cys593/Cys608, Cys610/Cys619, Cys626/Cys636, Cys631/Cys645, Cys647/Cys656, Cys663/Cys674, Cys668/Cys683, Cys685/Cys694, Cys701/Cys711, Cys706/Cys720, Cys722/Cys731, Cys740/Cys751, Cys745/Cys760, Cys762/Cys771, Cys777/Cys788, Cys782/Cys798, Cys800/Cys809, Cys816/Cys828, Cys822/Cys837, Cys839/Cys848, Cys855/Cys866, Cys860/Cys875, Cys877/Cys886, Cys893/Cys903, Cys898/Cys912, Cys914/Cys923, Cys930/Cys941, Cys935/Cys950, Cys952/Cys961, Cys968/Cys979, Cys973/Cys988, Cys990/Cys999, Cys1006/Cys1017, Cys1011/Cys1024, Cys1026/Cys1035, Cys1042/Cys1063, Cys1057/Cys1072, Cys1074/Cys1083, Cys1090/Cys1101, Cys1095/Cys1110, Cys1112/Cys1121, Cys1128/Cys1139, Cys1133/Cys1148, Cys1150/Cys1159, Cys1166/Cys1184, Cys1178/Cys1193, Cys1195/Cys1204, Cys1211/Cys1224, Cys1216/Cys1234, Cys1236/Cys1245, Cys1252/Cys1263, Cys1257/Cys1277, Cys1279/Cys1288, Cys1295/Cys1306, Cys1300/Cys1315, and Cys1317/Cys1326. An EGF-like 4; calcium-binding domain is found at 160–197 (DIDECRAGASCRHGGTCINTPGSFHCLCPLGYTGLLCE). In terms of domain architecture, EGF-like 5 spans 199–236 (PIVPCAPSPCRNGGTCRQSSDVTYDCACLPGFEGQNCE). The 37-residue stretch at 238-274 (NVDDCPGHRCLNGGTCVDGVNTYNCQCPPEWTGQFCT) folds into the EGF-like 6; calcium-binding domain. One can recognise an EGF-like 7 domain in the interval 276–314 (DVDECQLQPNACHNGGTCFNLLGGHSCVCVNGWTGESCS). Residues 316 to 352 (NIDDCATAVCFHGATCHDRVASFYCACPMGKTGLLCH) enclose the EGF-like 8; calcium-binding domain. The EGF-like 9 domain occupies 353–391 (LDDACVSNPCHEDAICDTNPVSGRAICTCPPGFTGGACD). The region spanning 393–431 (DVDECSIGANPCEHLGRCVNTQGSFLCQCGRGYTGPRCE) is the EGF-like 10; calcium-binding domain. One can recognise an EGF-like 11; calcium-binding domain in the interval 433–469 (DVNECLSGPCRNQATCLDRIGQFTCICMAGFTGTFCE). Positions 471–507 (DIDECQSSPCVNGGVCKDRVNGFSCTCPSGFSGSTCQ) constitute an EGF-like 12; calcium-binding domain. The region spanning 509–545 (DVDECASTPCRNGAKCVDQPDGYECRCAEGFEGTLCE) is the EGF-like 13; calcium-binding domain. An EGF-like 14; calcium-binding domain is found at 547–582 (NVDDCSPDPCHHGRCVDGIASFSCACAPGYTGIRCE). Residues 584-620 (QVDECRSQPCRYGGKCLDLVDKYLCRCPPGTTGVNCE) enclose the EGF-like 15; calcium-binding domain. The EGF-like 16; calcium-binding domain maps to 622-657 (NIDDCASNPCTFGVCRDGINRYDCVCQPGFTGPLCN). Residues 659–695 (EINECASSPCGEGGSCVDGENGFHCLCPPGSLPPLCL) form the EGF-like 17; calcium-binding domain. 3 consecutive EGF-like domains span residues 697–732 (ANHPCAHKPCSHGVCHDAPGGFQCVCDPGWSGPRCS), 736–772 (APDACESQPCQAGGTCTSDGIGFHCTCAPGFQGHQCE), and 773–810 (VLSPCTPSLCEHGGHCESDPDQLTVCSCPPGWQGPRCQ). The EGF-like 21; calcium-binding domain occupies 812–849 (DVDECAGASPCGPHGTCTNLPGSFRCICHGGYTGPFCD). In terms of domain architecture, EGF-like 22; calcium-binding spans 851-887 (DIDDCDPNPCLNGGSCQDGVGSFSCSCLSGFAGPRCA). An EGF-like 23; calcium-binding domain is found at 889-924 (DVDECLSSPCGPGTCTDHVASFTCTCPPGYGGFHCE). 5 EGF-like domains span residues 926–962 (DLLDCSPSSCFNGGTCVDGVNSFSCLCRPGYTGTHCQ), 964–1000 (KVDPCFSRPCLHGGICNPTHSGFECTCREGFTGNQCQ), 1002–1036 (PVDWCSQAPCQNGGRCVQTGAYCICPPEWSGPLCD), 1038–1084 (PSLP…SHCE), and 1086–1122 (EVDPCTAQPCQHGGTCRGYMGGYVCECPTGYSGDSCE). Residues 1124-1160 (DVDECASQPCQNGGSCIDLVAHYLCSCPPGTLGVLCE) form the EGF-like 29; calcium-binding domain. Residues 1162–1205 (NEDDCGPGPSLDSGLRCLHNGTCVDLVGGFRCNCPPGYTGLHCE) enclose the EGF-like 30; calcium-binding domain. The N-linked (GlcNAc...) asparagine glycan is linked to Asn1181. EGF-like domains lie at 1207–1246 (DINECRPGTCHAAHTRDCLQDPGGHFRCICLPGFTGPRCQ), 1248–1289 (ALFP…LRCE), 1291–1327 (VARSCRELQCPVGIPCQQTARGPRCACPPGLSGPSCR), and 1337–1375 (TNTSCAATPCLHGGSCLPVQSVPFFRCVCAPGWGGPRCE). Asn1338 is a glycosylation site (N-linked (GlcNAc...) asparagine). 12 disulfides stabilise this stretch: Cys1341–Cys1352, Cys1346–Cys1363, Cys1365–Cys1374, Cys1389–Cys1412, Cys1394–Cys1407, Cys1403–Cys1419, Cys1430–Cys1453, Cys1435–Cys1448, Cys1444–Cys1460, Cys1469–Cys1495, Cys1477–Cys1490, and Cys1486–Cys1502. LNR repeat units lie at residues 1389 to 1429 (CPRA…PWRQ), 1430 to 1467 (CEALQCWRLFNNSRCDPACSSPACLYDNFDCYSGGRDR), and 1469 to 1507 (CNPVYKKYCADHFADGRCDQGCNTEECGWDGLDCASEVP). N-linked (GlcNAc...) asparagine glycosylation is present at Asn1440. A helical transmembrane segment spans residues 1646–1666 (LPLLVAGAVFLLVIFVLGVMV). The Cytoplasmic portion of the chain corresponds to 1667–2319 (ARRKREHSTL…EVTPKRQVMA (653 aa)). ANK repeat units lie at residues 1840–1869 (TGETALHLAARYARADAAKRLLDAGADTNA), 1873–1903 (SGRTPLHTAVTADAQGVFQILIRNRSTDLDA), 1907–1936 (DGSTALILAARLAVEGMVEELIASHADVNA), 1940–1969 (LGKSALHWAAAVNNVEATLALLKNGANKDM), and 1973–2002 (KEETPLFLAAREGSYEAAKLLLDHFANREI). Disordered stretches follow at residues 2026-2046 (LDQPSGPRSPSGPHGLGPLLC) and 2059-2129 (QSGT…EGPY). Residues 2029–2046 (PSGPRSPSGPHGLGPLLC) are compositionally biased toward low complexity. Residue Arg2175 is modified to Omega-N-methylarginine. Positions 2197–2319 (LNPATPVSPH…EVTPKRQVMA (123 aa)) are disordered. Residues 2263-2288 (SLSDWSDSTPSPATATSATAAGALPA) are compositionally biased toward low complexity. Over residues 2297-2306 (SLPQSQTQLG) the composition is skewed to polar residues.

The protein belongs to the NOTCH family. In terms of assembly, heterodimer of a C-terminal fragment N(TM) and a N-terminal fragment N(EC) which are probably linked by disulfide bonds. Interacts with MAML1, MAML2 and MAML3 which act as transcriptional coactivators for NOTCH3. Interacts with PSMA1. Interacts with HIF1AN. In terms of processing, synthesized in the endoplasmic reticulum as an inactive form which is proteolytically cleaved by a furin-like convertase in the trans-Golgi network before it reaches the plasma membrane to yield an active, ligand-accessible form. Cleavage results in a C-terminal fragment N(TM) and a N-terminal fragment N(EC). Following ligand binding, it is cleaved by TNF-alpha converting enzyme (TACE) to yield a membrane-associated intermediate fragment called notch extracellular truncation (NEXT). This fragment is then cleaved by presenilin dependent gamma-secretase to release a notch-derived peptide containing the intracellular domain (NICD) from the membrane. Post-translationally, phosphorylated. Hydroxylated by HIF1AN. In terms of tissue distribution, expressed in postnatal central nervous system (CNS) germinal zones and, in early postnatal life, within numerous cells throughout the CNS. It is more highly localized to ventricular germinal zones.

It localises to the cell membrane. The protein resides in the nucleus. In terms of biological role, functions as a receptor for membrane-bound ligands Jagged1, Jagged2 and Delta1 to regulate cell-fate determination. Upon ligand activation through the released notch intracellular domain (NICD) it forms a transcriptional activator complex with RBPJ/RBPSUH and activates genes of the enhancer of split locus. Affects the implementation of differentiation, proliferation and apoptotic programs. Acts instructively to control the cell fate determination of CNS multipotent progenitor cells, resulting in astroglial induction and neuron/oligodendrocyte suppression. The chain is Neurogenic locus notch homolog protein 3 (Notch3) from Rattus norvegicus (Rat).